A 157-amino-acid polypeptide reads, in one-letter code: Myosin regulatory light chain, striated adductor muscle (157 aa).

2 EF-hand domains span residues 16–51 and 85–120; these read KQIQEMKEAFSMIDVDRDGFVSKEDIKAISEQLGRA and DSEETIRNAFAMFDEQETKKLNIEYIKDLLENMGDN. 4 residues coordinate Ca(2+): Asp-29, Asp-31, Asp-33, and Asp-40.

In molluscan muscle, calcium regulation is associated with myosin rather than with actin. Muscle myosin contains two types of light chains: the catalytic light chain, essential for ATPase activity, and the regulatory light chain, a calcium-binding protein responsible for Ca(2+) dependent binding and Ca(2+) dependent Mg-ATPase activity. The sequence is that of Myosin regulatory light chain, striated adductor muscle from Argopecten irradians (Bay scallop).